Here is a 201-residue protein sequence, read N- to C-terminus: Recombination protein RecR (201 aa).

The C4-type zinc finger occupies 57–72 (CKYCANFTNKDECDIC). Residues 80-176 (TKLMIVTTNE…QIYRIGFGIP (97 aa)) form the Toprim domain.

The protein belongs to the RecR family.

Its function is as follows. May play a role in DNA repair. It seems to be involved in an RecBC-independent recombinational process of DNA repair. It may act with RecF and RecO. In Ureaplasma parvum serovar 3 (strain ATCC 27815 / 27 / NCTC 11736), this protein is Recombination protein RecR.